Here is a 364-residue protein sequence, read N- to C-terminus: Large ribosomal subunit protein bL27m (364 aa).

The transit peptide at 1–19 (MFSSSWQQVPKFVVQQVRT) directs the protein to the mitochondrion.

Belongs to the bacterial ribosomal protein bL27 family.

The protein localises to the mitochondrion. Component of the large subunit of mitochondrial ribosome. The polypeptide is Large ribosomal subunit protein bL27m (MRPL2) (Kluyveromyces lactis (strain ATCC 8585 / CBS 2359 / DSM 70799 / NBRC 1267 / NRRL Y-1140 / WM37) (Yeast)).